Reading from the N-terminus, the 273-residue chain is N(omega)-hydroxy-L-arginine amidinohydrolase (273 aa).

Positions 109, 111, 113, 198, and 200 each coordinate Mn(2+).

This sequence belongs to the arginase family. Mn(2+) is required as a cofactor.

It catalyses the reaction N(omega)-hydroxy-L-arginine + H2O = hydroxyurea + L-ornithine. Involved in the biosynthesis of the antibiotic D-cycloserine (DCS), a cyclic structural analog of D-alanine, used as an antitubercular agent. Catalyzes the hydrolysis of N(omega)-hydroxy-L-arginine (NHA) to yield hydroxyurea (HU) and L-ornithine. The polypeptide is N(omega)-hydroxy-L-arginine amidinohydrolase (Streptomyces lavendulae).